Here is a 1152-residue protein sequence, read N- to C-terminus: MALRVLLLTALTLCHGFNLDTENAMTFQENARGFGQSVVQLQGSRVVVGAPQEIVAANQRGSLYQCDYSTGSCEPIRLQVPVEAVNMSLGLSLAATTSPPQLLACGPTVHQTCSENTYVKGLCFLFGSNLRQQPQKFPEALRGCPQEDSDIAFLIDGSGSIIPHDFRRMKEFVSTVMEQLKKSKTLFSLMQYSEEFRIHFTFKEFQNNPNPRSLVKPITQLLGRTHTATGIRKVVRELFNITNGARKNAFKILVVITDGEKFGDPLGYEDVIPEADREGVIRYVIGVGDAFRSEKSRQELNTIASKPPRDHVFQVNNFEALKTIQNQLREKIFAIEGTQTGSSSSFEHEMSQEGFSAAITSNGPLLSTVGSYDWAGGVFLYTSKEKSTFINMTRVDSDMNDAYLGYAAAIILRNRVQSLVLGAPRYQHIGLVAMFRQNTGMWESNANVKGTQIGAYFGASLCSVDVDSNGSTDLVLIGAPHYYEQTRGGQVSVCPLPRGRARWQCDAVLYGEQGQPWGRFGAALTVLGDVNGDKLTDVAIGAPGEEDNRGAVYLFHGTSGSGISPSHSQRIAGSKLSPRLQYFGQSLSGGQDLTMDGLVDLTVGAQGHVLLLRSQPVLRVKAIMEFNPREVARNVFECNDQVVKGKEAGEVRVCLHVQKSTRDRLREGQIQSVVTYDLALDSGRPHSRAVFNETKNSTRRQTQVLGLTQTCETLKLQLPNCIEDPVSPIVLRLNFSLVGTPLSAFGNLRPVLAEDAQRLFTALFPFEKNCGNDNICQDDLSITFSFMSLDCLVVGGPREFNVTVTVRNDGEDSYRTQVTFFFPLDLSYRKVSTLQNQRSQRSWRLACESASSTEVSGALKSTSCSINHPIFPENSEVTFNITFDVDSKASLGNKLLLKANVTSENNMPRTNKTEFQLELPVKYAVYMVVTSHGVSTKYLNFTASENTSRVMQHQYQVSNLGQRSLPISLVFLVPVRLNQTVIWDRPQVTFSENLSSTCHTKERLPSHSDFLAELRKAPVVNCSIAVCQRIQCDIPFFGIQEEFNATLKGNLSFDWYIKTSHNHLLIVSTAEILFNDSVFTLLPGQGAFVRSQTETKVEPFEVPNPLPLIVGSSVGGLLLLALITAALYKLGFFKRQYKDMMSEGGPPGAEPQ.

An N-terminal signal peptide occupies residues 1-16; the sequence is MALRVLLLTALTLCHG. At 17–1104 the chain is on the extracellular side; that stretch reads FNLDTENAMT…TKVEPFEVPN (1088 aa). FG-GAP repeat units follow at residues 18 to 75 and 76 to 135; these read NLDT…SCEP and IRLQ…QQPQ. A disulfide bridge links Cys66 with Cys73. N-linked (GlcNAc...) asparagine glycosylation occurs at Asn86. An intrachain disulfide couples Cys105 to Cys123. A VWFA domain is found at 150–328; the sequence is DIAFLIDGSG…EALKTIQNQL (179 aa). N-linked (GlcNAc...) asparagine glycosylation is present at Asn240. FG-GAP repeat units lie at residues 339 to 390, 391 to 442, 443 to 503, 506 to 564, and 569 to 629; these read QTGS…STFI, NMTR…TGMW, ESNA…RARW, DAVL…SGIS, and QRIA…FNPR. Asn391 is a glycosylation site (N-linked (GlcNAc...) asparagine). Positions 465, 467, 469, 473, 529, 531, 533, 537, 592, 596, and 600 each coordinate Ca(2+). Asn469 carries N-linked (GlcNAc...) asparagine glycosylation. Residues Cys654 and Cys711 are joined by a disulfide bond. N-linked (GlcNAc...) asparagine glycans are attached at residues Asn692, Asn696, and Asn734. A disulfide bridge connects residues Cys770 and Cys776. Residue Asn801 is glycosylated (N-linked (GlcNAc...) asparagine). Residues Cys847 and Cys864 are joined by a disulfide bond. N-linked (GlcNAc...) asparagine glycans are attached at residues Asn880, Asn900, Asn911, Asn940, Asn946, Asn978, Asn993, and Asn1021. Intrachain disulfides connect Cys998–Cys1022 and Cys1027–Cys1032. N-linked (GlcNAc...) asparagine glycosylation is found at Asn1044, Asn1050, and Asn1075. The chain crosses the membrane as a helical span at residues 1105–1128; the sequence is PLPLIVGSSVGGLLLLALITAALY. At 1129–1152 the chain is on the cytoplasmic side; it reads KLGFFKRQYKDMMSEGGPPGAEPQ. The short motif at 1131–1135 is the GFFKR motif element; that stretch reads GFFKR.

This sequence belongs to the integrin alpha chain family. In terms of assembly, heterodimer of an alpha and a beta subunit. ITGAM associates with ITGB2. Found in a complex with CD177 and ITGB2/CD18. Interacts with JAM3. Interacts with THBD. Interacts with complement factor H/CFH; this interaction mediates adhesion of neutrophils to pathogens leading to pathogen clearance. Interacts with TMEM268; this interaction inhibits ITGAM degradation via the endosome-lysosome pathway. In terms of tissue distribution, predominantly expressed in monocytes and granulocytes. Expressed in neutrophils (at protein level).

Its subcellular location is the cell membrane. The protein resides in the membrane raft. In terms of biological role, integrin ITGAM/ITGB2 is implicated in various adhesive interactions of monocytes, macrophages and granulocytes as well as in mediating the uptake of complement-coated particles and pathogens. It is identical with CR-3, the receptor for the iC3b fragment of the third complement component. It probably recognizes the R-G-D peptide in C3b. Integrin ITGAM/ITGB2 is also a receptor for fibrinogen, factor X and ICAM1. It recognizes P1 and P2 peptides of fibrinogen gamma chain. Regulates neutrophil migration. In association with beta subunit ITGB2/CD18, required for CD177-PRTN3-mediated activation of TNF primed neutrophils. May regulate phagocytosis-induced apoptosis in extravasated neutrophils. May play a role in mast cell development. Required with TYROBP/DAP12 in microglia to control production of microglial superoxide ions which promote the neuronal apoptosis that occurs during brain development. The polypeptide is Integrin alpha-M (ITGAM) (Homo sapiens (Human)).